A 99-amino-acid chain; its full sequence is Small ribosomal subunit protein bS20 (99 aa).

This sequence belongs to the bacterial ribosomal protein bS20 family.

Binds directly to 16S ribosomal RNA. The protein is Small ribosomal subunit protein bS20 of Picosynechococcus sp. (strain ATCC 27264 / PCC 7002 / PR-6) (Agmenellum quadruplicatum).